The primary structure comprises 160 residues: Prorelaxin (160 aa).

Cystine bridges form between C10-C147, C22-C160, and C146-C151. Residues 34 to 133 (QEKQRILGSG…KDFNLNIYSP (100 aa)) constitute a propeptide, connecting peptide.

It belongs to the insulin family. As to quaternary structure, heterodimer of a B chain and an A chain linked by two disulfide bonds. As to expression, expressed in the endometrium during pregnancy and in mammary gland during lactation.

The protein localises to the secreted. Relaxin is an ovarian hormone that acts with estrogen to produce dilatation of the birth canal in many mammals. It bears mature young, and allows separation of the pelvic bones. The chain is Prorelaxin (RLN) from Cavia porcellus (Guinea pig).